A 105-amino-acid chain; its full sequence is Heat shock protein HspQ (105 aa).

It belongs to the HspQ family.

It is found in the cytoplasm. Involved in the degradation of certain denaturated proteins, including DnaA, during heat shock stress. This chain is Heat shock protein HspQ, found in Klebsiella pneumoniae (strain 342).